The sequence spans 285 residues: MPRFGAHMSISGGVSKSFARGESVGLDSMQIFAKNERQWTAKPISPEEATAFRTEQQRTGIHPVVVHDSYLINLAAPADELREKSIAAFADELERCAQLDIPYLVTHPGAHTGIGEEAGLARVADAICRLLAEGVGGNTMILLETTAGQGTALGYRFEHLARLFELIPYHERLGICVDTCHIFAAGYDIRDPEGYQTTFAELDRLVGLTRVKCFHLNDSQKDLGSRVDRHAHIGQGCIGVEAFRMLVNDPRFADLPMIIETPKGEDMAEDRMNLALLRSLVQGAE.

Zn(2+)-binding residues include histidine 67, histidine 107, glutamate 144, aspartate 178, histidine 181, histidine 215, aspartate 228, histidine 230, and glutamate 260.

Belongs to the AP endonuclease 2 family. It depends on Zn(2+) as a cofactor.

The catalysed reaction is Endonucleolytic cleavage to 5'-phosphooligonucleotide end-products.. Endonuclease IV plays a role in DNA repair. It cleaves phosphodiester bonds at apurinic or apyrimidinic (AP) sites, generating a 3'-hydroxyl group and a 5'-terminal sugar phosphate. This is Probable endonuclease 4 from Chloroflexus aurantiacus (strain ATCC 29366 / DSM 635 / J-10-fl).